We begin with the raw amino-acid sequence, 422 residues long: Growth arrest-specific protein 7 (422 aa).

The tract at residues 1 to 117 is disordered; it reads MATALQKPGM…SPGRKQSKEN (117 aa). The WW domain occupies 22-55; it reads VILPPGWHSYLSPQGRRYYVNTTTNETTWERPSS. Residues 41–52 are compositionally biased toward polar residues; the sequence is VNTTTNETTWER. The segment covering 53-65 has biased composition (low complexity); it reads PSSSPGISASPGP. Phosphoserine occurs at positions 62 and 108. The segment covering 95 to 117 has biased composition (polar residues); that stretch reads RKSTGDSQNLGSSSPGRKQSKEN. Residues 141–402 enclose the F-BAR domain; it reads TEWSYCDYFW…LLRKVDPAKD (262 aa). Residues 254 to 329 adopt a coiled-coil conformation; sequence ENFKKDMKKC…RKSTQAGDDL (76 aa).

The protein resides in the cytoplasm. Functionally, may play a role in promoting maturation and morphological differentiation of cerebellar neurons. This Rattus norvegicus (Rat) protein is Growth arrest-specific protein 7 (Gas7).